The following is an 875-amino-acid chain: Cell surface glycoprotein (875 aa).

The first 23 residues, 1–23 (MTNTKQKINAVFLSALMVMSVFA), serve as a signal peptide directing secretion. The segment covering 137–157 (EVQNGGSGDVTGSTLQTSSSG) has biased composition (polar residues). Disordered regions lie at residues 137–158 (EVQN…SSGP) and 197–217 (LPTA…DFDV). A compositionally biased stretch (low complexity) spans 205–216 (DNGASGSNGDFD). N-linked (GlcNAc...) asparagine glycosylation occurs at Asn-253. The segment at 380 to 414 (YPASDSSNDGYASGGSHASSVTVRDTDGDGTDDSE) is disordered. Over residues 383–402 (SDSSNDGYASGGSHASSVTV) the composition is skewed to polar residues. 4 N-linked (GlcNAc...) asparagine glycosylation sites follow: Asn-455, Asn-563, Asn-715, and Asn-774. The disordered stretch occupies residues 794 to 852 (EAGSLEEEQPDTETPEPDTETPEPDTETPEPDTETPEPDTETPEPDTETEEATTEASGP). Over residues 797 to 846 (SLEEEQPDTETPEPDTETPEPDTETPEPDTETPEPDTETPEPDTETEEAT) the composition is skewed to acidic residues. A helical membrane pass occupies residues 851 to 875 (GPGFTAAIALIALVAAALLAVRRDN). Residues 852 to 854 (PGF) carry the PGF sorting signal motif.

This sequence belongs to the halobacterial S-layer protein family. In terms of processing, asn-455 is glycosylated by a pentasaccharide comprising a hexose, 2 hexuronic acids, a methyl ester of a hexuronic acid and a final hexose. The complete pentasaccharide is first assembled on dolichol phosphate and then transferred the glycan to the target Asn. Post-translationally, cleaved by the archaeosortase ArtA at the C-terminus, with removal of a short hydrophobic segment. Lipidation.

Its subcellular location is the secreted. The protein resides in the cell wall. It localises to the S-layer. The protein localises to the cell membrane. Its function is as follows. S-layer protein. The S-layer is a paracrystalline mono-layered assembly of proteins which coat the surface of the cell. This Haloarcula marismortui (strain ATCC 43049 / DSM 3752 / JCM 8966 / VKM B-1809) (Halobacterium marismortui) protein is Cell surface glycoprotein (csg1).